The following is a 719-amino-acid chain: Lanosterol synthase (719 aa).

A PFTB 1 repeat occupies 118 to 160 (RIEVIRYLVNHANPEDGGWGIHIEGKSTVFGTALNYVVLRILG). Catalysis depends on Asp451, which acts as the Proton donor. PFTB repeat units lie at residues 478–523 (LKDS…MIEH), 555–595 (VKNA…SCVK), and 604–645 (SRRA…VVQT).

This sequence belongs to the terpene cyclase/mutase family.

The catalysed reaction is (S)-2,3-epoxysqualene = lanosterol. It participates in terpene metabolism; lanosterol biosynthesis; lanosterol from farnesyl diphosphate: step 3/3. In terms of biological role, catalyzes the cyclization of (S)-2,3 oxidosqualene to lanosterol, a reaction that forms the sterol nucleus. The chain is Lanosterol synthase (ERG7) from Pneumocystis carinii.